A 126-amino-acid chain; its full sequence is Fatty acid-binding protein, liver (126 aa).

Ala-2 carries the N-acetylalanine modification.

Belongs to the calycin superfamily. Fatty-acid binding protein (FABP) family. In terms of tissue distribution, liver.

It is found in the cytoplasm. In terms of biological role, binds free fatty acids and their coenzyme A derivatives, bilirubin, and some other small molecules in the cytoplasm. May be involved in intracellular lipid transport this L-FABP binds only one fatty acid/molecule. Has more affinity for trans-parinaric acid than for cis-parinaric acid. The sequence is that of Fatty acid-binding protein, liver (fabp1) from Rhamdia sapo (South American catfish).